We begin with the raw amino-acid sequence, 900 residues long: Chromodomain-helicase-DNA-binding protein 1-like (900 aa).

The 166-residue stretch at valine 52 to aspartate 217 folds into the Helicase ATP-binding domain. An ATP-binding site is contributed by aspartate 65–threonine 72. The DEAH box signature appears at aspartate 168–histidine 171. The Helicase C-terminal domain occupies leucine 345 to glutamine 507. Serine 534 is modified (phosphoserine). Residues proline 546–glutamate 569 are disordered. The segment at threonine 606–leucine 640 is regulatory linker segment (RLS). Residues serine 612, serine 623, and serine 641 each carry the phosphoserine modification. Residues asparagine 620–lysine 678 are required for ATPase activity. A disordered region spans residues serine 641–alanine 673. Residues glutamate 643–alanine 680 adopt a coiled-coil conformation. Basic and acidic residues predominate over residues glutamine 653–alanine 673. Residues serine 709–proline 900 form the Macro domain. Serine 894 carries the post-translational modification Phosphoserine.

The protein belongs to the SNF2/RAD54 helicase family. In terms of assembly, interacts with nucleosomes; interacts with the acidic patch of histones. Interacts (via macro domain) with PARP1; interacts only when PARP1 is poly-ADP-ribosylated (PARylated). Interacts with CIAO1.

The protein localises to the nucleus. It localises to the chromosome. The enzyme catalyses ATP + H2O = ADP + phosphate + H(+). With respect to regulation, adopts an inactive conformation in absence of DNA damage. Binding to poly-ADP-ribosylated histones activates the ATP-dependent chromatin remodeler activity. ATP-dependent chromatin remodeler that mediates chromatin-remodeling following DNA damage. Recruited to DNA damage sites through interaction with poly-ADP-ribose: specifically recognizes and binds histones that are poly-ADP-ribosylated on serine residues in response to DNA damage. Poly-ADP-ribose-binding activates the ATP-dependent chromatin remodeler activity, thereby regulating chromatin during DNA repair. Catalyzes nucleosome sliding away from DNA breaks in an ATP-dependent manner. Chromatin remodeling activity promotes PARP2 removal from chromatin. In Mus musculus (Mouse), this protein is Chromodomain-helicase-DNA-binding protein 1-like (Chd1l).